The primary structure comprises 326 residues: DNA-directed RNA polymerase subunit alpha (326 aa).

The tract at residues 1 to 231 is alpha N-terminal domain (alpha-NTD); the sequence is MQTNLLKPKI…DQLVVFAALE (231 aa). The segment at 247 to 326 is alpha C-terminal domain (alpha-CTD); it reads VDPMLMRPVD…ESWPPANLEK (80 aa).

The protein belongs to the RNA polymerase alpha chain family. In terms of assembly, homodimer. The RNAP catalytic core consists of 2 alpha, 1 beta, 1 beta' and 1 omega subunit. When a sigma factor is associated with the core the holoenzyme is formed, which can initiate transcription.

It carries out the reaction RNA(n) + a ribonucleoside 5'-triphosphate = RNA(n+1) + diphosphate. DNA-dependent RNA polymerase catalyzes the transcription of DNA into RNA using the four ribonucleoside triphosphates as substrates. The sequence is that of DNA-directed RNA polymerase subunit alpha from Polynucleobacter necessarius subsp. necessarius (strain STIR1).